The sequence spans 372 residues: Y-box-binding protein 3 (372 aa).

Residues 1-82 (MSEAGEATTT…LATAAGSEDA (82 aa)) form a disordered region. Ser-2 carries the N-acetylserine modification. Ser-2 bears the Phosphoserine mark. Over residues 7–28 (ATTTTTTTLPQAPTEAAAAAPQ) the composition is skewed to low complexity. Phosphoserine is present on Ser-34. A compositionally biased stretch (low complexity) spans 35-79 (PVGSGAPQAAAPAPAAHVAGNPGGDAAPAATGTAAAASLATAAGS). Residues 93-157 (GTVKWFNVRN…GEKGAEAANV (65 aa)) enclose the CSD domain. Ser-134, Ser-201, Ser-203, and Ser-204 each carry phosphoserine. The interval 181-372 (YYGRRRGPPR…APPTQQSSAE (192 aa)) is disordered. Positions 222–238 (QLRRPQYRPQYRQRRFP) are enriched in basic residues. The residue at position 251 (Arg-251) is an Omega-N-methylarginine. Positions 314–324 (QQATSGPNQPS) are enriched in polar residues. Residue Ser-324 is modified to Phosphoserine. Arg-326 carries the post-translational modification Omega-N-methylarginine. Over residues 327–340 (RGYRRPYNYRRRPR) the composition is skewed to basic residues. Phosphoserine occurs at positions 346, 369, and 370.

In terms of assembly, found in a mRNP complex with YBX2. Interacts with RRP1B. As to expression, highly expressed in skeletal muscle and heart.

The protein localises to the cytoplasm. The protein resides in the nucleus. In terms of biological role, binds to the GM-CSF promoter. Seems to act as a repressor. Also binds to full-length mRNA and to short RNA sequences containing the consensus site 5'-UCCAUCA-3'. May have a role in translation repression. This is Y-box-binding protein 3 (YBX3) from Homo sapiens (Human).